Consider the following 66-residue polypeptide: Myrmicitoxin(1)-Pr5a (66 aa).

The first 25 residues, 1-25 (MRSLYLSFSLTIIFVLVIMHAEAKA), serve as a signal peptide directing secretion. A propeptide spanning residues 26–37 (ISEPNAIAEADP) is cleaved from the precursor. At Val-65 the chain carries Valine amide.

It belongs to the formicidae venom clade 3 family. As to expression, expressed by the venom gland.

The protein resides in the secreted. In terms of biological role, toxin that causes a rapid and irreversible paralysis when intrathoracically injected into insects (blowflies). Does not cause spontaneous nocifensive behaviors by intraplantar injection in mice. Exhibits hemolytic and cytotoxic activities on HEK293 cells. The polypeptide is Myrmicitoxin(1)-Pr5a (Pogonomyrmex rugosus (Desert harvester ant)).